Consider the following 170-residue polypeptide: Probable chorismate pyruvate-lyase (170 aa).

Positions 77, 114, and 157 each coordinate substrate.

This sequence belongs to the UbiC family.

The protein resides in the cytoplasm. It catalyses the reaction chorismate = 4-hydroxybenzoate + pyruvate. Its pathway is cofactor biosynthesis; ubiquinone biosynthesis. Removes the pyruvyl group from chorismate, with concomitant aromatization of the ring, to provide 4-hydroxybenzoate (4HB) for the ubiquinone pathway. The polypeptide is Probable chorismate pyruvate-lyase (Pasteurella multocida (strain Pm70)).